Consider the following 500-residue polypeptide: Maturase K (500 aa).

Belongs to the intron maturase 2 family. MatK subfamily.

The protein localises to the plastid. The protein resides in the chloroplast. Its function is as follows. Usually encoded in the trnK tRNA gene intron. Probably assists in splicing its own and other chloroplast group II introns. This Brasenia schreberi (Water shield) protein is Maturase K.